The sequence spans 351 residues: Translation initiation factor eIF2B subunit beta (351 aa).

Belongs to the eIF-2B alpha/beta/delta subunits family. Component of the translation initiation factor 2B (eIF2B) complex which is a heterodecamer of two sets of five different subunits: alpha, beta, gamma, delta and epsilon. Subunits alpha, beta and delta comprise a regulatory subcomplex and subunits epsilon and gamma comprise a catalytic subcomplex. Within the complex, the hexameric regulatory complex resides at the center, with the two heterodimeric catalytic subcomplexes bound on opposite sides.

It is found in the cytoplasm. Its subcellular location is the cytosol. Activated by the chemical integrated stress response (ISR) inhibitor ISRIB which stimulates guanine nucleotide exchange factor activity for both phosphorylated and unphosphorylated eIF2. Acts as a component of the translation initiation factor 2B (eIF2B) complex, which catalyzes the exchange of GDP for GTP on eukaryotic initiation factor 2 (eIF2) gamma subunit. Its guanine nucleotide exchange factor activity is repressed when bound to eIF2 complex phosphorylated on the alpha subunit, thereby limiting the amount of methionyl-initiator methionine tRNA available to the ribosome and consequently global translation is repressed. The chain is Translation initiation factor eIF2B subunit beta (EIF2B2) from Oryctolagus cuniculus (Rabbit).